Here is a 522-residue protein sequence, read N- to C-terminus: Echinocystic acid 23-monooxygenase (522 aa).

Residues 4-24 (LPYIATSIACIVILRWALNMM) form a helical; Signal-anchor for type II membrane protein membrane-spanning segment. N-linked (GlcNAc...) asparagine glycosylation occurs at N190. C470 contributes to the heme binding site.

The protein belongs to the cytochrome P450 family. Heme serves as cofactor. Mainly expressed in flowers and flower buds, to a lesser extent in young leaves and, at low levels, in old leaves, stems and roots.

The protein resides in the membrane. It participates in secondary metabolite biosynthesis; terpenoid biosynthesis. Functionally, component of the oleanane-type triterpene saponins (e.g. saponarioside A and saponarioside B) biosynthetic pathway, leading to the production of natural products with detergent properties used as traditional sources of soap. An oxidoreductase that facilitates the oxidation of the methyl group to a carboxyl group at the C-23 position of echinocystic acid, resulting in the formation of quillaic acid (QA). The sequence is that of Echinocystic acid 23-monooxygenase from Saponaria officinalis (Common soapwort).